Here is a 416-residue protein sequence, read N- to C-terminus: Multifunctional CCA protein (416 aa).

Residues glycine 8 and arginine 11 each coordinate ATP. Glycine 8 and arginine 11 together coordinate CTP. Mg(2+) contacts are provided by glutamate 21 and aspartate 23. The ATP site is built by arginine 91, arginine 137, and arginine 140. Residues arginine 91, arginine 137, and arginine 140 each contribute to the CTP site. One can recognise an HD domain in the interval 228-329; that stretch reads TGIHTLMVLK…LKLFDAVDAW (102 aa).

The protein belongs to the tRNA nucleotidyltransferase/poly(A) polymerase family. Bacterial CCA-adding enzyme type 1 subfamily. Monomer. Can also form homodimers and oligomers. It depends on Mg(2+) as a cofactor. Ni(2+) is required as a cofactor.

It carries out the reaction a tRNA precursor + 2 CTP + ATP = a tRNA with a 3' CCA end + 3 diphosphate. The catalysed reaction is a tRNA with a 3' CCA end + 2 CTP + ATP = a tRNA with a 3' CCACCA end + 3 diphosphate. Its function is as follows. Catalyzes the addition and repair of the essential 3'-terminal CCA sequence in tRNAs without using a nucleic acid template. Adds these three nucleotides in the order of C, C, and A to the tRNA nucleotide-73, using CTP and ATP as substrates and producing inorganic pyrophosphate. tRNA 3'-terminal CCA addition is required both for tRNA processing and repair. Also involved in tRNA surveillance by mediating tandem CCA addition to generate a CCACCA at the 3' terminus of unstable tRNAs. While stable tRNAs receive only 3'-terminal CCA, unstable tRNAs are marked with CCACCA and rapidly degraded. This chain is Multifunctional CCA protein, found in Photorhabdus laumondii subsp. laumondii (strain DSM 15139 / CIP 105565 / TT01) (Photorhabdus luminescens subsp. laumondii).